A 212-amino-acid polypeptide reads, in one-letter code: Large ribosomal subunit protein uL3 (212 aa).

The disordered stretch occupies residues 134 to 154; the sequence is RKTHGNSVSHRVPGSIGQNQT. Glutamine 153 is subject to N5-methylglutamine.

This sequence belongs to the universal ribosomal protein uL3 family. In terms of assembly, part of the 50S ribosomal subunit. Forms a cluster with proteins L14 and L19. Post-translationally, methylated by PrmB.

Functionally, one of the primary rRNA binding proteins, it binds directly near the 3'-end of the 23S rRNA, where it nucleates assembly of the 50S subunit. This Dichelobacter nodosus (strain VCS1703A) protein is Large ribosomal subunit protein uL3.